The following is a 394-amino-acid chain: Probable 6-phosphogluconolactonase ARB_02015 (394 aa).

The N-terminal stretch at 1-21 (MKTVPFLSLLQAGILTSGIVA) is a signal peptide. N51 carries an N-linked (GlcNAc...) asparagine glycan.

The protein belongs to the cycloisomerase 2 family.

The protein localises to the secreted. The enzyme catalyses 6-phospho-D-glucono-1,5-lactone + H2O = 6-phospho-D-gluconate + H(+). It functions in the pathway carbohydrate degradation; pentose phosphate pathway; D-ribulose 5-phosphate from D-glucose 6-phosphate (oxidative stage): step 2/3. Functionally, catalyzes the hydrolysis of 6-phosphogluconolactone to 6-phosphogluconate. In Arthroderma benhamiae (strain ATCC MYA-4681 / CBS 112371) (Trichophyton mentagrophytes), this protein is Probable 6-phosphogluconolactonase ARB_02015.